Here is a 591-residue protein sequence, read N- to C-terminus: CTP synthase 1-A (591 aa).

Residues 300 to 554 form the Glutamine amidotransferase type-1 domain; the sequence is SIALVGKYTK…LASVGRLSQY (255 aa). Catalysis depends on for GATase activity residues Cys-399, His-526, and Glu-528.

The protein belongs to the CTP synthase family.

It carries out the reaction UTP + L-glutamine + ATP + H2O = CTP + L-glutamate + ADP + phosphate + 2 H(+). The protein operates within pyrimidine metabolism; CTP biosynthesis via de novo pathway; CTP from UDP: step 2/2. In terms of biological role, this enzyme is involved in the de novo synthesis of CTP, a precursor of DNA, RNA and phospholipids. Catalyzes the ATP-dependent amination of UTP to CTP with either L-glutamine or ammonia as a source of nitrogen. In Xenopus laevis (African clawed frog), this protein is CTP synthase 1-A (ctps1-a).